The chain runs to 101 residues: Signal recognition particle 19 kDa protein (101 aa).

The protein belongs to the SRP19 family. Part of the signal recognition particle protein translocation system, which is composed of SRP and FtsY. Archaeal SRP consists of a 7S RNA molecule of 300 nucleotides and two protein subunits: SRP54 and SRP19.

It is found in the cytoplasm. In terms of biological role, involved in targeting and insertion of nascent membrane proteins into the cytoplasmic membrane. Binds directly to 7S RNA and mediates binding of the 54 kDa subunit of the SRP. This chain is Signal recognition particle 19 kDa protein, found in Methanosarcina barkeri (strain Fusaro / DSM 804).